We begin with the raw amino-acid sequence, 391 residues long: Ectodysplasin-A (391 aa).

Over residues 1-21 the composition is skewed to basic and acidic residues; the sequence is MGYPEVERREPLPAAAPRERG. The disordered stretch occupies residues 1 to 28; the sequence is MGYPEVERREPLPAAAPRERGSQGCGCR. The Cytoplasmic portion of the chain corresponds to 1-41; it reads MGYPEVERREPLPAAAPRERGSQGCGCRGAPARAGEGNSCR. The helical; Signal-anchor for type II membrane protein transmembrane segment at 42 to 62 threads the bilayer; it reads LFLGFFGLSLALHLLTLCCYL. The Extracellular segment spans residues 63-391; it reads ELRSELRRER…AIRLGEAPAS (329 aa). Disordered stretches follow at residues 72–129 and 146–244; these read RGTE…DSQD and YSEE…TGTR. Residues 86-96 show a composition bias toward low complexity; sequence TSGTLSSPGSL. The region spanning 180–229 is the Collagen-like domain; it reads GPPGPNGPPGPPGPPGPQGPPGIPGIPGIPGTTVMGPPGPPGPPGPQGPP. 2 stretches are compositionally biased toward pro residues: residues 181–203 and 216–228; these read PPGPNGPPGPPGPPGPQGPPGIP and PPGPPGPPGPQGP. The THD domain occupies 249–385; the sequence is AVVHLQGQGS…HTTFFGAIRL (137 aa). A glycan (N-linked (GlcNAc...) asparagine) is linked at Asn-313. Cys-332 and Cys-346 form a disulfide bridge. An N-linked (GlcNAc...) asparagine glycan is attached at Asn-372.

The protein belongs to the tumor necrosis factor family. In terms of assembly, homotrimer. The homotrimers may then dimerize and form higher-order oligomers. Post-translationally, N-glycosylated. Processing by furin produces a secreted form.

The protein localises to the cell membrane. The protein resides in the secreted. Functionally, cytokine which is involved in epithelial-mesenchymal signaling during morphogenesis of ectodermal organs. Functions as a ligand activating the DEATH-domain containing receptors EDAR and EDA2R. Isoform TAA binds only to the receptor EDAR, while isoform TA-A2 binds exclusively to the receptor EDA2R. May also play a role in cell adhesion. Isoform TAA binds only to the receptor EDAR, while isoform TA-A2 binds exclusively to the receptor EDA2R. Its function is as follows. Isoform TA-A2 binds exclusively to the receptor EDA2R. This chain is Ectodysplasin-A (Eda), found in Mus musculus (Mouse).